A 320-amino-acid chain; its full sequence is Protein HEXIM1 (320 aa).

The segment at 1–124 (MAEPLLSEFQ…RRRPSKKKRL (124 aa)) is disordered. Residues 9–19 (FQHQPQTSNCT) show a composition bias toward polar residues. Positions 24 to 47 (VHEERNPDRPPGAEERVPEEDSRW) are enriched in basic and acidic residues. Ser98 is modified (phosphoserine). Residues 109–124 (VGKKKHRRRPSKKKRL) show a composition bias toward basic residues. Residues 111–138 (KKKHRRRPSKKKRLWKPYYTLTWEEKKK) are basic region; mediates nuclear localization and interaction with 7SK snRNA and NR3C1. The interval 163–166 (PYNT) is interaction with P-TEFb. The autoinhibitory acidic region; in absence of 7SK snRNA interacts with the basic region preventing interaction with P-TEFb and modulating subcellular localization stretch occupies residues 171-211 (MDDHDQEEPDLKTGLYPKRAAAKSDDTSDEDFMEEAGEEDG). The segment at 174–223 (HDQEEPDLKTGLYPKRAAAKSDDTSDEDFMEEAGEEDGGSDGMGGDGSEF) is disordered. Position 194 is a phosphoserine (Ser194). Thr197 carries the post-translational modification Phosphothreonine. The span at 197-212 (TSDEDFMEEAGEEDGG) shows a compositional bias: acidic residues. Residues Ser198, Ser213, and Ser221 each carry the phosphoserine modification. Residues 244–310 (SKQELIKEYL…LTENELHRQQ (67 aa)) adopt a coiled-coil conformation. Residues 247-275 (ELIKEYLELEKCLSRMEDENNRLRLESQR) form a mediates interaction with CCNT1 region. The required for inhibition of ESR1-dependent transcription stretch occupies residues 271-316 (LESQRLDGDDARVRELELELDRLRAENLQLLTENELHRQQERAPLS).

The protein belongs to the HEXIM family. In terms of assembly, homooligomer and heterooligomer with HEXIM2; probably dimeric. Core component of the 7SK RNP complex, at least composed of 7SK RNA, LARP7, MEPCE, HEXIM1 (or HEXIM2) and P-TEFb (composed of CDK9 and CCNT1/cyclin-T1). Interacts with the N-CoR complex through NCOR1. Interacts with ESR1 and NR3C1. May interact with NF-kappa-B through RELA. Interacts with CCNT2; mediates formation of a tripartite complex with KPNA2. Part of the HDP-RNP complex composed of at least HEXIM1, PRKDC, XRCC5, XRCC6, paraspeckle proteins (SFPQ, NONO, PSPC1, RBM14, and MATR3) and NEAT1 non-coding RNA.

The protein resides in the nucleus. It localises to the cytoplasm. In terms of biological role, transcriptional regulator which functions as a general RNA polymerase II transcription inhibitor. Core component of the 7SK RNP complex: in cooperation with 7SK snRNA sequesters P-TEFb in a large inactive 7SK snRNP complex preventing RNA polymerase II phosphorylation and subsequent transcriptional elongation. May also regulate NF-kappa-B, ESR1, NR3C1 and CIITA-dependent transcriptional activity. Plays a role in the regulation of DNA virus-mediated innate immune response by assembling into the HDP-RNP complex, a complex that serves as a platform for IRF3 phosphorylation and subsequent innate immune response activation through the cGAS-STING pathway. The polypeptide is Protein HEXIM1 (HEXIM1) (Bos taurus (Bovine)).